A 173-amino-acid polypeptide reads, in one-letter code: Mesencephalic astrocyte-derived neurotrophic factor homolog (173 aa).

A signal peptide spans 1–22; it reads MKTWYMVVVIGFLATLVQTSLA. 4 disulfide bridges follow: C28-C114, C31-C103, C61-C72, and C148-C151.

This sequence belongs to the ARMET family.

It is found in the secreted. Its function is as follows. Required during the maturation of the embryonic nervous system for maintenance of neuronal and cuticular connectivity. Essential for maintenance of dopaminergic neurons and dopamine levels. In Drosophila yakuba (Fruit fly), this protein is Mesencephalic astrocyte-derived neurotrophic factor homolog.